The sequence spans 257 residues: Protein vip1 (257 aa).

Residues 3-76 (NQVIVTNISP…NKIQITSEDG (74 aa)) enclose the RRM domain. The segment at 74–99 (EDGGAASTTDQGGAGGDQAARQEDKP) is disordered. Positions 75–84 (DGGAASTTDQ) are enriched in low complexity. Serine 132 and serine 177 each carry phosphoserine. Positions 217 to 257 (ARRLADAKNQAEGTASPASSTPTAPAEKEPTAPTTESKTTE) are disordered. At threonine 230 the chain carries Phosphothreonine. A compositionally biased stretch (low complexity) spans 230 to 257 (TASPASSTPTAPAEKEPTAPTTESKTTE). Serine 232 and serine 235 each carry phosphoserine.

In Schizosaccharomyces pombe (strain 972 / ATCC 24843) (Fission yeast), this protein is Protein vip1 (vip1).